Consider the following 643-residue polypeptide: ATP-dependent RNA helicase DeaD (643 aa).

Positions 6–34 (TTFADLGLKAPILEALTDLGYEKPSPIQA) match the Q motif motif. In terms of domain architecture, Helicase ATP-binding spans 37–208 (IPHLLDGRDV…RRFMKEPQEV (172 aa)). 50–57 (AQTGSGKT) contacts ATP. The short motif at 156–159 (DEAD) is the DEAD box element. The Helicase C-terminal domain occupies 232–379 (KNEALVRFLE…EVELPNAELL (148 aa)). Disordered regions lie at residues 440–482 (VPPV…KRER) and 557–643 (MNMQ…GGDA). Composition is skewed to basic and acidic residues over residues 448 to 482 (PRRE…KRER) and 567 to 643 (PRTE…GGDA).

The protein belongs to the DEAD box helicase family. DeaD/CsdA subfamily.

The protein resides in the cytoplasm. It catalyses the reaction ATP + H2O = ADP + phosphate + H(+). In terms of biological role, DEAD-box RNA helicase involved in various cellular processes at low temperature, including ribosome biogenesis, mRNA degradation and translation initiation. This Klebsiella pneumoniae protein is ATP-dependent RNA helicase DeaD.